The primary structure comprises 465 residues: Cysteine--tRNA ligase (465 aa).

Cys27 is a binding site for Zn(2+). The 'HIGH' region motif lies at 29–39 (PTVYDDAHLGH). Zn(2+) contacts are provided by Cys207, His237, and Glu241. The short motif at 269–273 (KMSKS) is the 'KMSKS' region element. Lys272 contributes to the ATP binding site.

It belongs to the class-I aminoacyl-tRNA synthetase family. Monomer. Requires Zn(2+) as cofactor.

It localises to the cytoplasm. The enzyme catalyses tRNA(Cys) + L-cysteine + ATP = L-cysteinyl-tRNA(Cys) + AMP + diphosphate. The polypeptide is Cysteine--tRNA ligase (Nitratiruptor sp. (strain SB155-2)).